A 275-amino-acid polypeptide reads, in one-letter code: 2,3,4,5-tetrahydropyridine-2,6-dicarboxylate N-succinyltransferase (275 aa).

The substrate site is built by R106 and D143.

This sequence belongs to the transferase hexapeptide repeat family. As to quaternary structure, homotrimer.

The protein localises to the cytoplasm. It carries out the reaction (S)-2,3,4,5-tetrahydrodipicolinate + succinyl-CoA + H2O = (S)-2-succinylamino-6-oxoheptanedioate + CoA. The protein operates within amino-acid biosynthesis; L-lysine biosynthesis via DAP pathway; LL-2,6-diaminopimelate from (S)-tetrahydrodipicolinate (succinylase route): step 1/3. The protein is 2,3,4,5-tetrahydropyridine-2,6-dicarboxylate N-succinyltransferase of Burkholderia pseudomallei (strain 1106a).